The sequence spans 164 residues: R-phycoerythrin alpha chain (164 aa).

Residues Asn-47, Lys-81, Cys-82, Arg-84, His-88, Arg-137, Cys-139, and Arg-142 each coordinate (2R,3E)-phycoerythrobilin.

The protein belongs to the phycobiliprotein family. As to quaternary structure, heterododecamer of 6 alpha and 6 beta chains. The basic functional unit of phycobiliproteins is a ring-shaped hexamer formed from two back-to-back trimers contacting via the alpha chain subunits. The trimers are composed of alpha/beta subunit heterodimers arranged around a three-fold axis of symmetry. The phycoerythrins also contain a gamma subunit which is located in the center of the hexamer. Contains two covalently linked phycoerythrobilin chromophores. In PubMed:8876649 the authors refer to the bilins as phycoerythrobilins. In the PDB entries, the bilins are named as phycocyanobilins although the modeled compounds correspond to phycoerythrobilins.

The protein resides in the plastid. Its subcellular location is the chloroplast thylakoid membrane. Its function is as follows. Light-harvesting photosynthetic tetrapyrrole chromophore-protein from the phycobiliprotein complex. This Polysiphonia urceolata (Red alga) protein is R-phycoerythrin alpha chain (cpeA).